The sequence spans 307 residues: Type 2A encapsulin shell protein (307 aa).

The protein belongs to the encapsulin family. Family 2A subfamily. As to quaternary structure, homooligomeric. The encapsulin nanocompartment is formed by 60 subunits; monomers form pentamers which assemble to form shells. There are 12 charged pores where the pentamers meet as well as 3-fold axis channels and dimer channels.

The protein resides in the encapsulin nanocompartment. Its function is as follows. Shell component of a type 2A encapsulin nanocompartment. Forms encapsulin nanocompartments about 24 nm in diameter from 60 monomers. Probably encapsulates at least cysteine desulfurase (CyD) and allows passage of cysteine into its interior, probably involved in sulfur metabolism. The sequence is that of Type 2A encapsulin shell protein from Mycobacterium avium.